The chain runs to 388 residues: Methylthioribose-1-phosphate isomerase (388 aa).

Catalysis depends on aspartate 258, which acts as the Proton donor.

Belongs to the eIF-2B alpha/beta/delta subunits family. MtnA subfamily.

The protein localises to the cytoplasm. The protein resides in the nucleus. It catalyses the reaction 5-(methylsulfanyl)-alpha-D-ribose 1-phosphate = 5-(methylsulfanyl)-D-ribulose 1-phosphate. The protein operates within amino-acid biosynthesis; L-methionine biosynthesis via salvage pathway; L-methionine from S-methyl-5-thio-alpha-D-ribose 1-phosphate: step 1/6. In terms of biological role, catalyzes the interconversion of methylthioribose-1-phosphate (MTR-1-P) into methylthioribulose-1-phosphate (MTRu-1-P). The polypeptide is Methylthioribose-1-phosphate isomerase (mri-1) (Neurospora crassa (strain ATCC 24698 / 74-OR23-1A / CBS 708.71 / DSM 1257 / FGSC 987)).